We begin with the raw amino-acid sequence, 145 residues long: 3-hydroxyacyl-[acyl-carrier-protein] dehydratase FabZ (145 aa).

His-49 is an active-site residue.

Belongs to the thioester dehydratase family. FabZ subfamily.

The protein resides in the cytoplasm. It catalyses the reaction a (3R)-hydroxyacyl-[ACP] = a (2E)-enoyl-[ACP] + H2O. Involved in unsaturated fatty acids biosynthesis. Catalyzes the dehydration of short chain beta-hydroxyacyl-ACPs and long chain saturated and unsaturated beta-hydroxyacyl-ACPs. The sequence is that of 3-hydroxyacyl-[acyl-carrier-protein] dehydratase FabZ from Rickettsia akari (strain Hartford).